Consider the following 1128-residue polypeptide: Testis-expressed protein 2 (1128 aa).

3 disordered regions span residues 1–28, 71–99, and 130–279; these read MTSL…VQRS, AKED…GLSV, and PLAL…FFKV. Residues 130–186 are compositionally biased toward low complexity; sequence PLALSPGSSSSGPLASSPSVSSLSEQKTSSSSPLSSPSKSPVLSSSASSSALSSAKP. Residue Ser-195 is modified to Phosphoserine. The segment covering 248–274 has biased composition (polar residues); sequence QFTQPRNTGGDSKTAPSSPLTSPSDTR. Thr-261 is modified (phosphothreonine). Residues Ser-264, Ser-265, Ser-269, and Ser-294 each carry the phosphoserine modification. The disordered stretch occupies residues 345–387; the sequence is KEEEGDSEGEGYGSDSNTSRSDHLKPTEDASKEVEPKGSQASS. Over residues 364 to 380 the composition is skewed to basic and acidic residues; sequence RSDHLKPTEDASKEVEP. Transmembrane regions (helical) follow at residues 473-493 and 495-515; these read TLGF…PYYM and GLFL…WFFT. Asn-593 is a glycosylation site (N-linked (GlcNAc...) asparagine). A compositionally biased stretch (basic and acidic residues) spans 645-671; the sequence is SKAQSDKEATEEKPPPEKELPSEDLKK. Disordered regions lie at residues 645–688, 716–765, 787–821, and 945–981; these read SKAQ…DPIL, RKPA…QKEL, QDNR…EEEQ, and ADSD…GYVG. Phosphoserine is present on residues Ser-733, Ser-739, Ser-745, Ser-749, Ser-752, Ser-799, and Ser-816. The segment covering 736 to 751 has biased composition (low complexity); sequence SSPSGHLSHSRSSSKG. The segment covering 796–806 has biased composition (polar residues); that stretch reads PVQSAESSPTA. One can recognise an SMP-LTD domain in the interval 817-1102; the sequence is EEEEQEAWVN…MPNMDDVYIP (286 aa). Residues 946 to 963 are compositionally biased toward acidic residues; it reads DSDEESSSAGSSEEDDPP.

It is found in the endoplasmic reticulum membrane. The protein localises to the nucleus membrane. In terms of biological role, during endoplasmic reticulum (ER) stress or when cellular ceramide levels increase, may induce contacts between the ER and medial-Golgi complex to facilitate non-vesicular transport of ceramides from the ER to the Golgi complex where they are converted to complex sphingolipids, preventing toxic ceramide accumulation. The polypeptide is Testis-expressed protein 2 (Tex2) (Mus musculus (Mouse)).